The following is a 264-amino-acid chain: Thymidylate synthase (264 aa).

R21 contacts dUMP. H51 contacts (6R)-5,10-methylene-5,6,7,8-tetrahydrofolate. Residue 126 to 127 participates in dUMP binding; sequence RR. C146 (nucleophile) is an active-site residue. Residues 166 to 169, N177, and 207 to 209 each bind dUMP; these read RSGD and HIY. D169 contacts (6R)-5,10-methylene-5,6,7,8-tetrahydrofolate. A (6R)-5,10-methylene-5,6,7,8-tetrahydrofolate-binding site is contributed by A263.

Belongs to the thymidylate synthase family. Bacterial-type ThyA subfamily. Homodimer.

The protein resides in the cytoplasm. It catalyses the reaction dUMP + (6R)-5,10-methylene-5,6,7,8-tetrahydrofolate = 7,8-dihydrofolate + dTMP. It participates in pyrimidine metabolism; dTTP biosynthesis. In terms of biological role, catalyzes the reductive methylation of 2'-deoxyuridine-5'-monophosphate (dUMP) to 2'-deoxythymidine-5'-monophosphate (dTMP) while utilizing 5,10-methylenetetrahydrofolate (mTHF) as the methyl donor and reductant in the reaction, yielding dihydrofolate (DHF) as a by-product. This enzymatic reaction provides an intracellular de novo source of dTMP, an essential precursor for DNA biosynthesis. The chain is Thymidylate synthase from Sinorhizobium medicae (strain WSM419) (Ensifer medicae).